The sequence spans 177 residues: Outer membrane lipoprotein Blc (177 aa).

The first 18 residues, 1-18, serve as a signal peptide directing secretion; sequence MRILPVVAAVTAAFLVVA. Cys-19 is lipidated: N-palmitoyl cysteine. Cys-19 is lipidated: S-diacylglycerol cysteine.

Belongs to the calycin superfamily. Lipocalin family. As to quaternary structure, homodimer.

It is found in the cell outer membrane. Its function is as follows. Involved in the storage or transport of lipids necessary for membrane maintenance under stressful conditions. Displays a binding preference for lysophospholipids. The polypeptide is Outer membrane lipoprotein Blc (Citrobacter freundii).